The chain runs to 324 residues: MECIYCFETVSAVVPCAGKCDALICVDCFKGSMDALDTFPKCQCGLEYSPNELEPVLPAATLRGLDAKVKQVWDDNIHTVNAVNAQIDDCKKTYLDALPLAASIATQSFLRKALDDYAAKITKTAEEKPVDCPAEFCMGFRVGGKPCSVCGCTECAYCKALMNIDKPHTCKAEDLESIKAMDSNYVKCPECKKRVEKIDGCNDMTCAYCSTNFNYRTGLKQHGGSHNRIHLTHHQNLLSVKFQHSLSPSTLDALKRLETTMNVIESPKIYKRYNKKIAYEWISKRNMSTAIRREYGNISKEISALTVDDVELHLVSVLTKFNII.

This is an uncharacterized protein from Dryophytes versicolor (chameleon treefrog).